We begin with the raw amino-acid sequence, 141 residues long: Nucleoside diphosphate kinase (141 aa).

ATP contacts are provided by K11, F59, R87, T93, R104, and N114. H117 functions as the Pros-phosphohistidine intermediate in the catalytic mechanism.

Belongs to the NDK family. In terms of assembly, homotetramer. Mg(2+) serves as cofactor.

The protein resides in the cytoplasm. The enzyme catalyses a 2'-deoxyribonucleoside 5'-diphosphate + ATP = a 2'-deoxyribonucleoside 5'-triphosphate + ADP. It catalyses the reaction a ribonucleoside 5'-diphosphate + ATP = a ribonucleoside 5'-triphosphate + ADP. Its function is as follows. Major role in the synthesis of nucleoside triphosphates other than ATP. The ATP gamma phosphate is transferred to the NDP beta phosphate via a ping-pong mechanism, using a phosphorylated active-site intermediate. This is Nucleoside diphosphate kinase from Ralstonia nicotianae (strain ATCC BAA-1114 / GMI1000) (Ralstonia solanacearum).